The following is a 459-amino-acid chain: Type IV methyl-directed restriction enzyme EcoKMcrB subunit (459 aa).

GTP is bound by residues 201–208 (GPPGVGKT), 300–303 (DKRG), and 333–336 (NTAD).

Recognizes N4- and C5-methylcytosine (and 5-hydroxy-methylcytosines) produced by a broad range of DNA methylases and appears to act against 5-methylcytosine preceded by a purine residue. Binds to DNA containing methylated cytosines; also binds to GTP. Isoform 33 kDa is less active than isoform 51 kDa and may play a role in regulating the activity of isoform 51 kDa by competing with it in DNA and protein binding abilities. This is Type IV methyl-directed restriction enzyme EcoKMcrB subunit (mcrB) from Escherichia coli (strain K12).